Consider the following 214-residue polypeptide: Charged multivesicular body protein 2b (214 aa).

The stretch at 25–55 (QRQIARDRTALEKQEKQLEMEIKKMAKTGNR) forms a coiled coil. The tract at residues 178–199 (MAHAPSAARKTPSAATAKADGI) is disordered. The MIT-interacting motif signature appears at 202 to 212 (EDIERQLKALG).

It belongs to the SNF7 family. Probable core component of the endosomal sorting required for transport complex III (ESCRT-III). ESCRT-III components are thought to multimerize to form a flat lattice on the perimeter membrane of the endosome.

The protein resides in the cytoplasm. Its subcellular location is the cytosol. It is found in the late endosome membrane. In terms of biological role, probable core component of the endosomal sorting required for transport complex III (ESCRT-III) which is involved in multivesicular bodies (MVBs) formation and sorting of endosomal cargo proteins into MVBs. MVBs contain intraluminal vesicles (ILVs) that are generated by invagination and scission from the limiting membrane of the endosome and mostly are delivered to lysosomes enabling degradation of membrane proteins, such as stimulated growth factor receptors, lysosomal enzymes and lipids. In Danio rerio (Zebrafish), this protein is Charged multivesicular body protein 2b (chmp2b).